A 476-amino-acid polypeptide reads, in one-letter code: UDP-N-acetylmuramate--L-alanine ligase (476 aa).

125–131 lines the ATP pocket; that stretch reads GTHGKTT.

This sequence belongs to the MurCDEF family.

It localises to the cytoplasm. The catalysed reaction is UDP-N-acetyl-alpha-D-muramate + L-alanine + ATP = UDP-N-acetyl-alpha-D-muramoyl-L-alanine + ADP + phosphate + H(+). It participates in cell wall biogenesis; peptidoglycan biosynthesis. Functionally, cell wall formation. The protein is UDP-N-acetylmuramate--L-alanine ligase of Actinobacillus succinogenes (strain ATCC 55618 / DSM 22257 / CCUG 43843 / 130Z).